The chain runs to 81 residues: Small ribosomal subunit protein uS15 (81 aa).

Belongs to the universal ribosomal protein uS15 family. In terms of assembly, part of the 30S ribosomal subunit. Forms a bridge to the 50S subunit in the 70S ribosome, contacting the 23S rRNA.

Functionally, one of the primary rRNA binding proteins, it binds directly to 16S rRNA where it helps nucleate assembly of the platform of the 30S subunit by binding and bridging several RNA helices of the 16S rRNA. Forms an intersubunit bridge (bridge B4) with the 23S rRNA of the 50S subunit in the ribosome. The chain is Small ribosomal subunit protein uS15 from Mesomycoplasma hyorhinis (Mycoplasma hyorhinis).